Reading from the N-terminus, the 681-residue chain is Dipeptidyl carboxypeptidase (681 aa).

Residue H470 coordinates Zn(2+). Residue E471 is part of the active site. Zn(2+)-binding residues include H474 and H477.

This sequence belongs to the peptidase M3 family. Requires Zn(2+) as cofactor.

The protein resides in the cytoplasm. The enzyme catalyses Hydrolysis of unblocked, C-terminal dipeptides from oligopeptides, with broad specificity. Does not hydrolyze bonds in which P1' is Pro, or both P1 and P1' are Gly.. Its activity is regulated as follows. Stimulated by Mn(2+), Mg(2+), Co(2+) and Ca(2+), inhibited by Cu(2+), Ni(2+), Zn(2+), chymostatin and 1,10-phenanthroline. Its function is as follows. Removes dipeptides from the C-termini of N-blocked tripeptides, tetrapeptides and larger peptides. The protein is Dipeptidyl carboxypeptidase of Escherichia coli (strain K12).